The following is a 180-amino-acid chain: Large ribosomal subunit protein uL5c (180 aa).

The protein belongs to the universal ribosomal protein uL5 family. Part of the 50S ribosomal subunit; contacts the 5S rRNA.

It localises to the plastid. Its subcellular location is the chloroplast. Functionally, binds 5S rRNA, forms part of the central protuberance of the 50S subunit. This chain is Large ribosomal subunit protein uL5c (rpl5), found in Oedogonium cardiacum (Filamentous green alga).